Consider the following 437-residue polypeptide: GTPase Der (437 aa).

EngA-type G domains lie at 4 to 167 (PVIA…PEDE) and 176 to 351 (IRIS…ENHN). Residues 10–17 (GRPNVGKS), 57–61 (DTGGI), 119–122 (NKID), 182–189 (GRPNVGKS), 229–233 (DTAGM), and 294–297 (NKWD) contribute to the GTP site. The KH-like domain maps to 352 to 436 (LRVPTHVLND…PIKIIARKKN (85 aa)).

The protein belongs to the TRAFAC class TrmE-Era-EngA-EngB-Septin-like GTPase superfamily. EngA (Der) GTPase family. In terms of assembly, associates with the 50S ribosomal subunit.

Functionally, GTPase that plays an essential role in the late steps of ribosome biogenesis. This chain is GTPase Der, found in Halalkalibacterium halodurans (strain ATCC BAA-125 / DSM 18197 / FERM 7344 / JCM 9153 / C-125) (Bacillus halodurans).